The chain runs to 377 residues: SH2/SH3 adapter protein NCK1 (377 aa).

Alanine 2 carries the post-translational modification N-acetylalanine. Residues 2-61 (AEEVVVVAKFDYVAQQEQELDIKKNERLWLLDDSKSWWRVRNSMNKTGFVPSNYVERKNS) form the SH3 1 domain. Phosphoserine occurs at positions 85, 89, 91, and 96. A Phosphotyrosine modification is found at tyrosine 105. Residues 106–165 (DLNMPAYVKFNYMAEREDELSLIKGTKVIVMEKCSDGWWRGSYNGQVGWFPSNYVTEEGD) form the SH3 2 domain. Serine 166 is subject to Phosphoserine. The SH3 3 domain occupies 190–252 (QVLHVVQALY…PKNYVTVMQN (63 aa)). The region spanning 282–376 (WYYGKVTRHQ…GEKLYLVKHL (95 aa)) is the SH2 domain.

In terms of assembly, interacts (via SH2 domain and SH3 domain 2) with EGFR. Interacts with PAK1 and SOS1. Interacts (via SH3 domains) with PKN2. Associates with BLNK, PLCG1, VAV1 and NCK1 in a B-cell antigen receptor-dependent fashion. Interacts with SOCS7. This interaction is required for nuclear import. Part of a complex containing PPP1R15B, PP1 and NCK1. Interacts with RALGPS1. Interacts with CAV2 (tyrosine phosphorylated form). Interacts with ADAM15. Interacts with FASLG. Directly interacts with RASA1. Interacts with isoform 4 of MINK1. Interacts with FLT1 (tyrosine phosphorylated). Interacts with KDR (tyrosine phosphorylated). Interacts (via SH2 domain) with EPHB1; activates the JUN cascade to regulate cell adhesion. Interacts with EPHA2. Interacts (via SH2 domain) with PDGFRB (tyrosine phosphorylated). Interacts with the inactive form of EIF2AK2/PKR. Interacts with PTPN1. Interacts with INSR/insulin receptor (in response to insulin stimulation); This interaction may mediate PTPN1 recruitment leading to INSR dephosphorylation. Interacts with IRS1. Phosphorylated on Ser and Tyr residues. Phosphorylated in response to activation of EGFR and FcERI. Phosphorylated by activated PDGFRB.

It localises to the cytoplasm. The protein resides in the endoplasmic reticulum. Its subcellular location is the nucleus. In terms of biological role, adapter protein which associates with tyrosine-phosphorylated growth factor receptors, such as KDR and PDGFRB, or their cellular substrates. Maintains low levels of EIF2S1 phosphorylation by promoting its dephosphorylation by PP1. Plays a role in the DNA damage response, not in the detection of the damage by ATM/ATR, but for efficient activation of downstream effectors, such as that of CHEK2. Plays a role in ELK1-dependent transcriptional activation in response to activated Ras signaling. Modulates the activation of EIF2AK2/PKR by dsRNA. May play a role in cell adhesion and migration through interaction with ephrin receptors. This chain is SH2/SH3 adapter protein NCK1 (NCK1), found in Homo sapiens (Human).